The primary structure comprises 684 residues: DNA ligase (684 aa).

NAD(+) is bound by residues 34–38, 83–84, and Glu-117; these read DYDFD and SL. The N6-AMP-lysine intermediate role is filled by Lys-119. Residues Arg-140, Glu-188, Lys-301, and Lys-325 each contribute to the NAD(+) site. The Zn(2+) site is built by Cys-419, Cys-422, Cys-437, and Cys-443. In terms of domain architecture, BRCT spans 602–684; sequence DAPQTFAGMT…QTMLAAESGD (83 aa).

Belongs to the NAD-dependent DNA ligase family. LigA subfamily. Mg(2+) serves as cofactor. It depends on Mn(2+) as a cofactor.

The enzyme catalyses NAD(+) + (deoxyribonucleotide)n-3'-hydroxyl + 5'-phospho-(deoxyribonucleotide)m = (deoxyribonucleotide)n+m + AMP + beta-nicotinamide D-nucleotide.. Functionally, DNA ligase that catalyzes the formation of phosphodiester linkages between 5'-phosphoryl and 3'-hydroxyl groups in double-stranded DNA using NAD as a coenzyme and as the energy source for the reaction. It is essential for DNA replication and repair of damaged DNA. This chain is DNA ligase, found in Chloroherpeton thalassium (strain ATCC 35110 / GB-78).